The following is a 437-amino-acid chain: Phosphomethylpyrimidine synthase (437 aa).

Substrate contacts are provided by residues Asn69, Met98, Tyr127, His163, 185 to 187 (SRG), 226 to 229 (DACR), and Glu265. Residue His269 participates in Zn(2+) binding. Tyr292 contacts substrate. His333 is a Zn(2+) binding site. Cys409, Cys412, and Cys416 together coordinate [4Fe-4S] cluster.

This sequence belongs to the ThiC family. Requires [4Fe-4S] cluster as cofactor.

The catalysed reaction is 5-amino-1-(5-phospho-beta-D-ribosyl)imidazole + S-adenosyl-L-methionine = 4-amino-2-methyl-5-(phosphooxymethyl)pyrimidine + CO + 5'-deoxyadenosine + formate + L-methionine + 3 H(+). It participates in cofactor biosynthesis; thiamine diphosphate biosynthesis. Catalyzes the synthesis of the hydroxymethylpyrimidine phosphate (HMP-P) moiety of thiamine from aminoimidazole ribotide (AIR) in a radical S-adenosyl-L-methionine (SAM)-dependent reaction. The chain is Phosphomethylpyrimidine synthase from Clostridium botulinum (strain ATCC 19397 / Type A).